Here is a 348-residue protein sequence, read N- to C-terminus: Adenosine deaminase (348 aa).

The Zn(2+) site is built by His16 and His18. Substrate contacts are provided by His18, Asp20, and Gly174. His201 is a Zn(2+) binding site. Glu204 serves as the catalytic Proton donor. Asp282 lines the Zn(2+) pocket.

This sequence belongs to the metallo-dependent hydrolases superfamily. Adenosine and AMP deaminases family. Adenosine deaminase subfamily. It depends on Zn(2+) as a cofactor.

The enzyme catalyses adenosine + H2O + H(+) = inosine + NH4(+). It carries out the reaction 2'-deoxyadenosine + H2O + H(+) = 2'-deoxyinosine + NH4(+). In terms of biological role, catalyzes the hydrolytic deamination of adenosine and 2-deoxyadenosine. The polypeptide is Adenosine deaminase (Clostridium kluyveri (strain ATCC 8527 / DSM 555 / NBRC 12016 / NCIMB 10680 / K1)).